The primary structure comprises 263 residues: Protein MARD1 (263 aa).

An FLZ-type zinc finger spans residues 219–263 (SFLSRCFTCKKNLDQKQDIYIYRGEKGFCSSECRYQEMLLDQMET).

Belongs to the FLZ family. Interacts with KIN10 and KIN11 via its FLZ-type zinc finger domain. Interacts with KINB1 and KINB2 via its N-terminal part. Interacts with TZF4, TZF5 and TZF6. Interacts with MPK3 and MPK6.

The protein resides in the cytoplasm. It is found in the stress granule. The protein localises to the P-body. Its function is as follows. May act as an adapter to facilitate the interaction of SnRK1 complex with effector proteins, conferring tissue- and stimulus-type specific differences in the SnRK1 regulation pathway. Involved in seed dormancy control. The chain is Protein MARD1 from Arabidopsis thaliana (Mouse-ear cress).